Consider the following 404-residue polypeptide: Probable cysteine desulfurase (404 aa).

N6-(pyridoxal phosphate)lysine is present on lysine 226. Cysteine 363 acts as the Cysteine persulfide intermediate in catalysis.

It belongs to the class-V pyridoxal-phosphate-dependent aminotransferase family. Csd subfamily. Requires pyridoxal 5'-phosphate as cofactor.

It catalyses the reaction (sulfur carrier)-H + L-cysteine = (sulfur carrier)-SH + L-alanine. Catalyzes the removal of elemental sulfur and selenium atoms from L-cysteine, L-cystine, L-selenocysteine, and L-selenocystine to produce L-alanine. The polypeptide is Probable cysteine desulfurase (csd) (Vibrio cholerae serotype O1 (strain ATCC 39315 / El Tor Inaba N16961)).